A 311-amino-acid polypeptide reads, in one-letter code: GPN-loop GTPase 2 (311 aa).

20–25 (GSGKTT) contributes to the GTP binding site. The Gly-Pro-Asn (GPN)-loop; involved in dimer interface motif lies at 77–79 (GPN). 179-182 (SKMD) is a binding site for GTP.

It belongs to the GPN-loop GTPase family. In terms of assembly, heterodimers with gpn1 or gpn3. Binds to RNA polymerase II (RNAPII).

Small GTPase required for proper localization of RNA polymerase II and III (RNAPII and RNAPIII). May act at an RNAP assembly step prior to nuclear import. This Danio rerio (Zebrafish) protein is GPN-loop GTPase 2.